The primary structure comprises 264 residues: Glutamate racemase (264 aa).

Substrate is bound by residues 9–10 (DS) and 41–42 (YG). The active-site Proton donor/acceptor is the Cys-72. 73 to 74 (NT) serves as a coordination point for substrate. Cys-183 acts as the Proton donor/acceptor in catalysis. 184-185 (TH) serves as a coordination point for substrate.

It belongs to the aspartate/glutamate racemases family.

The enzyme catalyses L-glutamate = D-glutamate. It participates in cell wall biogenesis; peptidoglycan biosynthesis. Provides the (R)-glutamate required for cell wall biosynthesis. This chain is Glutamate racemase, found in Geobacillus kaustophilus (strain HTA426).